The following is a 256-amino-acid chain: MSSTRIPVIALLAAAGRGTRLGGPIPKAFVTLRERTLLERSLQAMLTSESVDEIIILVSPDMETYARDLLRKRGLLNDPEGVRIRLVHGGGERADSVWAGLQAILLDDATPDAIVLIHDSARALTPPGMIARVVRKVHEGATAVIPVLPVSDTIKRVSLDAGVVVDTPNRAELRAVQTPQGFLLSELVAANKKFFADPNPGFIPTDDASLMEWYGADVVCVQGDPMAFKVTTPIDMMLAQRITDEAEPTIFEVPGD.

It belongs to the IspD/TarI cytidylyltransferase family. IspD subfamily.

The enzyme catalyses 2-C-methyl-D-erythritol 4-phosphate + CTP + H(+) = 4-CDP-2-C-methyl-D-erythritol + diphosphate. It participates in isoprenoid biosynthesis; isopentenyl diphosphate biosynthesis via DXP pathway; isopentenyl diphosphate from 1-deoxy-D-xylulose 5-phosphate: step 2/6. Its function is as follows. Catalyzes the formation of 4-diphosphocytidyl-2-C-methyl-D-erythritol from CTP and 2-C-methyl-D-erythritol 4-phosphate (MEP). This is 2-C-methyl-D-erythritol 4-phosphate cytidylyltransferase from Corynebacterium glutamicum (strain R).